The following is a 780-amino-acid chain: Lon protease (780 aa).

In terms of domain architecture, Lon N-terminal spans 11 to 204 (IPVLPLRDVV…RLMAIMESEI (194 aa)). 356 to 363 (GPPGVGKT) contributes to the ATP binding site. One can recognise a Lon proteolytic domain in the interval 592 to 773 (KNQIGQVIGL…KEVLNLSLEN (182 aa)). Residues Ser-679 and Lys-722 contribute to the active site.

It belongs to the peptidase S16 family. As to quaternary structure, homohexamer. Organized in a ring with a central cavity.

Its subcellular location is the cytoplasm. It carries out the reaction Hydrolysis of proteins in presence of ATP.. ATP-dependent serine protease that mediates the selective degradation of mutant and abnormal proteins as well as certain short-lived regulatory proteins. Required for cellular homeostasis and for survival from DNA damage and developmental changes induced by stress. Degrades polypeptides processively to yield small peptide fragments that are 5 to 10 amino acids long. Binds to DNA in a double-stranded, site-specific manner. In Buchnera aphidicola subsp. Baizongia pistaciae (strain Bp), this protein is Lon protease.